The sequence spans 383 residues: MAKHLFTSESVSEGHPDKIADQISDAVLDAILAQDPKARVACETYVKTGMVLVGGEVTTSAWVDIEELTRKTVREIGYIHSDMGFDADSCAVLNAIGKQSPDINQGVDRADPKEQGAGDQGLMFGYASNETDILMPAPITYAHALVKRQSEVRKNGTLPWLRPDAKSQVTFAYEDNKIVGIDAIVLSTQHSPDIAQADLIEGVMETIIKPVLPAQWLNKDTKYFINPTGRFVIGGPMGDCGLTGRKIIVDTYGGMARHGGGAFSGKDPSKVDRSAAYAARYVAKNIVAAGLADRCEIQVSYAIGVAEPTSISVETFGTGKVSEEVLIKLVRQHFDLRPYGLTEMLNLARPIYQATAAYGHFGRSEFPWEATDKAEALRADAAL.

Residue His15 participates in ATP binding. Residue Asp17 coordinates Mg(2+). Glu43 is a K(+) binding site. Residues Glu56 and Gln99 each coordinate L-methionine. Residues 99–109 (QSPDINQGVDR) form a flexible loop region. Residues 164–166 (DAK), 230–231 (RF), Asp239, 245–246 (RK), Ala262, and Lys266 contribute to the ATP site. Asp239 provides a ligand contact to L-methionine. Lys270 provides a ligand contact to L-methionine.

It belongs to the AdoMet synthase family. Homotetramer; dimer of dimers. Mg(2+) serves as cofactor. Requires K(+) as cofactor.

It localises to the cytoplasm. It carries out the reaction L-methionine + ATP + H2O = S-adenosyl-L-methionine + phosphate + diphosphate. It functions in the pathway amino-acid biosynthesis; S-adenosyl-L-methionine biosynthesis; S-adenosyl-L-methionine from L-methionine: step 1/1. Functionally, catalyzes the formation of S-adenosylmethionine (AdoMet) from methionine and ATP. The overall synthetic reaction is composed of two sequential steps, AdoMet formation and the subsequent tripolyphosphate hydrolysis which occurs prior to release of AdoMet from the enzyme. This Shewanella oneidensis (strain ATCC 700550 / JCM 31522 / CIP 106686 / LMG 19005 / NCIMB 14063 / MR-1) protein is S-adenosylmethionine synthase.